The following is a 629-amino-acid chain: Methionine--tRNA ligase (629 aa).

The 'HIGH' region motif lies at 10–20 (YYVNSEPHIGS). Zn(2+) contacts are provided by Cys125, Cys128, Cys146, and Cys149. The 'KMSKS' region signature appears at 297–301 (KISKS). ATP is bound at residue Lys300. The tRNA-binding domain maps to 529–629 (DFSKVDLRIA…GEITPGAKVS (101 aa)).

It belongs to the class-I aminoacyl-tRNA synthetase family. MetG type 2A subfamily. In terms of assembly, homodimer. The cofactor is Zn(2+).

The protein resides in the cytoplasm. The catalysed reaction is tRNA(Met) + L-methionine + ATP = L-methionyl-tRNA(Met) + AMP + diphosphate. Its function is as follows. Is required not only for elongation of protein synthesis but also for the initiation of all mRNA translation through initiator tRNA(fMet) aminoacylation. The sequence is that of Methionine--tRNA ligase (metG) from Thermotoga maritima (strain ATCC 43589 / DSM 3109 / JCM 10099 / NBRC 100826 / MSB8).